Consider the following 389-residue polypeptide: D(-)-tartrate dehydratase (389 aa).

Substrate-binding positions include asparagine 21, asparagine 55, lysine 102, tyrosine 156, lysine 182, 182–184 (KMK), 213–215 (DAN), glutamate 239, glutamate 265, histidine 322, and 341–343 (ESY). Lysine 184 acts as the acceptor in catalysis. The Mg(2+) site is built by aspartate 213, glutamate 239, and glutamate 265. Histidine 322 serves as the catalytic Proton donor/acceptor.

This sequence belongs to the mandelate racemase/muconate lactonizing enzyme family. In terms of assembly, homooctamer; tetramer of dimers. Mg(2+) is required as a cofactor.

It carries out the reaction (S,S)-tartrate = oxaloacetate + H2O. In terms of biological role, catalyzes the dehydration of D-tartrate to oxaloacetate. The protein is D(-)-tartrate dehydratase (tarD) of Bradyrhizobium diazoefficiens (strain JCM 10833 / BCRC 13528 / IAM 13628 / NBRC 14792 / USDA 110).